Here is a 142-residue protein sequence, read N- to C-terminus: Large ribosomal subunit protein uL11 (142 aa).

It belongs to the universal ribosomal protein uL11 family. Part of the ribosomal stalk of the 50S ribosomal subunit. Interacts with L10 and the large rRNA to form the base of the stalk. L10 forms an elongated spine to which L12 dimers bind in a sequential fashion forming a multimeric L10(L12)X complex. Post-translationally, one or more lysine residues are methylated.

Its function is as follows. Forms part of the ribosomal stalk which helps the ribosome interact with GTP-bound translation factors. This is Large ribosomal subunit protein uL11 from Haemophilus ducreyi (strain 35000HP / ATCC 700724).